Reading from the N-terminus, the 1765-residue chain is Tight junction protein ZO-1 (1765 aa).

A PDZ 1 domain is found at 23-110 (TVTLHRAPGF…NAKITIRRKK (88 aa)). Positions 102-112 (AKITIRRKKKV) are enriched in basic residues. Residues 102–189 (AKITIRRKKK…QPAKPTKVTL (88 aa)) form a disordered region. The segment covering 123–136 (PVSDNEDDSYDEDV) has biased composition (acidic residues). Serine 125 carries the phosphoserine modification. Residue tyrosine 132 is modified to Phosphotyrosine. The span at 149–175 (RRGEKSWARDRSASRDRSLSPRSDRRS) shows a compositional bias: basic and acidic residues. A phosphoserine mark is found at serine 175, serine 178, and serine 179. A Phosphothreonine modification is found at threonine 185. Residues 186-264 (KVTLVKSRKN…KLKMVVQRDE (79 aa)) enclose the PDZ 2 domain. A phosphoserine mark is found at serine 212 and serine 241. Position 267 is a phosphothreonine (threonine 267). Residues serine 275, serine 277, serine 280, serine 284, serine 290, serine 294, serine 297, serine 300, serine 323, serine 329, serine 334, serine 337, and serine 353 each carry the phosphoserine modification. Residues 296–363 (ASDHSVRSHD…TPVKHVDDHT (68 aa)) form a disordered region. The segment covering 299–308 (HSVRSHDRPP) has biased composition (basic and acidic residues). A compositionally biased stretch (polar residues) spans 325–338 (HSTQSPQQPSNGSL). The residue at position 354 (threonine 354) is a Phosphothreonine. A PDZ 3 domain is found at 421–502 (SMKLVKFRKG…GEEVTILAQK (82 aa)). The 69-residue stretch at 516–584 (GDSFYIRTHF…PNKNRAEQLA (69 aa)) folds into the SH3 domain. A phosphoserine mark is found at serine 617 and serine 622. The tract at residues 633–876 (YERVVLREAG…GTPPESAITR (244 aa)) is occludin (OCLN)-binding region. The Guanylate kinase-like domain maps to 690 to 791 (RLHTIKQIID…WYGALKEAIQ (102 aa)). At threonine 809 the chain carries Phosphothreonine. Residues serine 810 and serine 821 each carry the phosphoserine modification. Tyrosine 822 carries the post-translational modification Phosphotyrosine. Residues serine 824, serine 828, and serine 837 each carry the phosphoserine modification. 2 disordered regions span residues 825 to 941 (APGS…PASS) and 1023 to 1042 (ALGH…YDPQ). A phosphothreonine mark is found at threonine 846, threonine 848, threonine 854, threonine 861, and threonine 868. Residues 879–892 (EPVREDSSGMHHEN) show a composition bias toward basic and acidic residues. A compositionally biased stretch (low complexity) spans 893–906 (QTYPPYSPQAQPQA). Serine 912 carries the post-translational modification Phosphoserine. At serine 1071 the chain carries Phosphoserine. Residues 1092–1585 (SYYDDKQPYP…SSTQPPEFDS (494 aa)) are disordered. Residues 1106–1124 (DTQHPRDLDSRQHPEEASE) are compositionally biased toward basic and acidic residues. Phosphotyrosine is present on residues tyrosine 1139 and tyrosine 1164. Residues 1150-1370 (RTSTLRHEEQ…FDRRSFESKP (221 aa)) are actin-binding region (ABR). Basic and acidic residues-rich tracts occupy residues 1268 to 1285 (KMFE…KDVN) and 1335 to 1346 (PPEDIVRSNHYD). Tyrosine 1353 is modified (phosphotyrosine). Serine 1365 is modified (phosphoserine). The span at 1388–1399 (SQSQPNFSSYSS) shows a compositional bias: low complexity. The segment covering 1401–1418 (GKPETDAMDRSFSEKRYD) has biased composition (basic and acidic residues). Serine 1411 is modified (phosphoserine). Composition is skewed to polar residues over residues 1442 to 1468 (NSSL…NSYI) and 1509 to 1519 (GAEQTQKTITP). The span at 1535 to 1544 (PFERKFESPK) shows a compositional bias: basic and acidic residues. A phosphoserine mark is found at serine 1542 and serine 1614. The 135-residue stretch at 1631–1765 (ATARGIFNSN…NCVSVLIDHF (135 aa)) folds into the ZU5 domain.

This sequence belongs to the MAGUK family. In terms of assembly, homodimer. Forms heterodimers TJP3. Forms a heterodimer (via PDZ2 domain) with TJP2/ZO2 (via PDZ2 domain). Interacts with OCLN. Interacts with CALM, claudins, CGN/cingulin, CXADR, GJA12, GJD3 and UBN1. Interacts (via ZU5 domain) with CDC42BPB and MYZAP. Interacts (via PDZ domain) with GJA1. Interacts (via PDZ domains) with ANKRD2. Interacts with BVES (via the C-terminus cytoplasmic tail). Interacts with HSPA4. Interacts with KIRREL1. Interacts with DLL1. Interacts with USP53 (via the C-terminal region). Interacts with DNMBP (via C-terminal domain); required for the apical cell-cell junction localization of DNMBP. Interacts with SPEF1. Interacts (via N-terminus) with CTNNA1. Interacts with CLDN18. Interacts with CLDN16 (via TRV motif); this is a prerequisite for anchoring of CLDN16 at the tight junction. Interacts with PKP1; the interaction facilitates TJP1/ZO-1 localization to the plasma membrane. Phosphorylated at tyrosine redidues in response to epidermal growth factor (EGF). This response is dependent on an intact actin microfilament system. Dephosphorylated by Ptprj.

The protein resides in the cell membrane. The protein localises to the cell junction. It is found in the tight junction. Its subcellular location is the gap junction. Its function is as follows. TjpP1, Tjp2, and Tjp3 are closely related scaffolding proteins that link tight junction (TJ) transmembrane proteins such as claudins, junctional adhesion molecules, and occludin to the actin cytoskeleton. The tight junction acts to limit movement of substances through the paracellular space and as a boundary between the compositionally distinct apical and basolateral plasma membrane domains of epithelial and endothelial cells. Necessary for lumenogenesis, and particularly efficient epithelial polarization and barrier formation. Plays a role in the regulation of cell migration by targeting Cdc42bpb to the leading edge of migrating cells. Plays an important role in podosome formation and associated function, thus regulating cell adhesion and matrix remodeling. With Tjp2 and Tjp3, participates in the junctional retention and stability of the transcription factor Dbpa, but is not involved in its shuttling to the nucleus. May play a role in mediating cell morphology changes during ameloblast differentiation via its role in tight junctions. This chain is Tight junction protein ZO-1, found in Rattus norvegicus (Rat).